A 285-amino-acid chain; its full sequence is DegV domain-containing protein CA_C3284 (285 aa).

The DegV domain occupies 3-280; it reads VKILTDSTSC…PGAIGIAYYT (278 aa). Residues Ser-59 and Ser-91 each contribute to the hexadecanoate site.

Its function is as follows. May bind long-chain fatty acids, such as palmitate, and may play a role in lipid transport or fatty acid metabolism. In Clostridium acetobutylicum (strain ATCC 824 / DSM 792 / JCM 1419 / IAM 19013 / LMG 5710 / NBRC 13948 / NRRL B-527 / VKM B-1787 / 2291 / W), this protein is DegV domain-containing protein CA_C3284.